The chain runs to 875 residues: Alanine--tRNA ligase (875 aa).

4 residues coordinate Zn(2+): His563, His567, Cys665, and His669.

This sequence belongs to the class-II aminoacyl-tRNA synthetase family. Requires Zn(2+) as cofactor.

Its subcellular location is the cytoplasm. The catalysed reaction is tRNA(Ala) + L-alanine + ATP = L-alanyl-tRNA(Ala) + AMP + diphosphate. Its function is as follows. Catalyzes the attachment of alanine to tRNA(Ala) in a two-step reaction: alanine is first activated by ATP to form Ala-AMP and then transferred to the acceptor end of tRNA(Ala). Also edits incorrectly charged Ser-tRNA(Ala) and Gly-tRNA(Ala) via its editing domain. The chain is Alanine--tRNA ligase from Shewanella pealeana (strain ATCC 700345 / ANG-SQ1).